The following is a 126-amino-acid chain: Fluoride-specific ion channel FluC (126 aa).

Transmembrane regions (helical) follow at residues 4 to 24 (PLLS…FLGL), 33 to 53 (IPLG…FAMA), 67 to 87 (FVIT…IEIV), and 97 to 117 (MAML…CLGL). Positions 74 and 77 each coordinate Na(+).

Belongs to the fluoride channel Fluc/FEX (TC 1.A.43) family.

The protein localises to the cell inner membrane. It catalyses the reaction fluoride(in) = fluoride(out). With respect to regulation, na(+) is not transported, but it plays an essential structural role and its presence is essential for fluoride channel function. Functionally, fluoride-specific ion channel. Important for reducing fluoride concentration in the cell, thus reducing its toxicity. The polypeptide is Fluoride-specific ion channel FluC (Acinetobacter baumannii (strain AB307-0294)).